Here is a 668-residue protein sequence, read N- to C-terminus: Protein brown (668 aa).

At 1–412 the chain is on the cytoplasmic side; it reads MPMDEGDAQG…TEDLANIRSG (412 aa). Positions 31–328 constitute an ABC transporter domain; it reads YSFWNECRKQ…FTEGFMQPKN (298 aa). Position 63–70 (63–70) interacts with ATP; it reads GGSGAGKT. A helical membrane pass occupies residues 413–433; sequence LIGFGFFMTTAVTLSLMYSGV. Residues 434 to 453 are Extracellular-facing; it reads GGLTQRTVQDVGGSIFMLSN. The chain crosses the membrane as a helical span at residues 454–474; sequence EMIFTFSYGVTYIFPAALPII. Over 475–490 the chain is Cytoplasmic; it reads RREVAEGTYSLSAYYV. The chain crosses the membrane as a helical span at residues 491–511; the sequence is ALVLSFVPVAFFKGYMFLSVI. Residues 512 to 524 lie on the Extracellular side of the membrane; the sequence is YASIYYTRGFLLY. A helical transmembrane segment spans residues 525–545; the sequence is ITMGFLMSLSAIAAVGYGVFL. At 546–561 the chain is on the cytoplasmic side; that stretch reads SSLFETDKMASECAAP. A helical membrane pass occupies residues 562–582; sequence FDLIFLIFGGTYMNVDSVPLL. At 583 to 637 the chain is on the extracellular side; the sequence is KYFSLFFYSNEALMYNFWIDIDNIACXVNDEHPCCQTGLEVLQQASFRTADYTFW. The helical transmembrane segment at 638–658 threads the bilayer; it reads LDCASLLVVALVFHIVSFTLI. Residues 659–668 are Cytoplasmic-facing; it reads RRYINRSGYY.

It belongs to the ABC transporter superfamily. ABCG family. Eye pigment precursor importer (TC 3.A.1.204) subfamily. In terms of assembly, may form a heterodimer with w/white. As to expression, expressed in eyes.

The protein resides in the membrane. The enzyme catalyses guanine(out) + ATP + H2O = guanine(in) + ADP + phosphate + H(+). The catalysed reaction is riboflavin(in) + ATP + H2O = riboflavin(out) + ADP + phosphate + H(+). It catalyses the reaction (6S)-5,6,7,8-tetrahydrofolate(out) + ATP + H2O = (6S)-5,6,7,8-tetrahydrofolate(in) + ADP + phosphate + H(+). ATP-dependent transporter of the ATP-binding cassette (ABC) family which transports various molecules including bioamines, neurotransmitters and metabolic intermediates. In the eye and probably in association with w/white, required for the transport of the eye red pigment precursor, guanine, into pigment cell granules. In Malpighian tubules, involved in guanine uptake. Probably in association with w/white, involved in aging-induced intestinal stem cell proliferation in the midgut by regulating tetrahydrofolate transport. In Drosophila virilis (Fruit fly), this protein is Protein brown.